We begin with the raw amino-acid sequence, 342 residues long: Ketol-acid reductoisomerase (NADP(+)) (342 aa).

Residues 2–182 (AKIYYDDDAD…GGLRAGGIET (181 aa)) enclose the KARI N-terminal Rossmann domain. Residues 25–28 (YGSQ), R48, S51, S53, and 83–86 (DQNQ) each bind NADP(+). Residue H108 is part of the active site. G134 serves as a coordination point for NADP(+). In terms of domain architecture, KARI C-terminal knotted spans 183 to 328 (SFREETETDL…KELRKMYSWL (146 aa)). Residues D191, E195, E227, and E231 each contribute to the Mg(2+) site. Substrate is bound at residue S252.

The protein belongs to the ketol-acid reductoisomerase family. Requires Mg(2+) as cofactor.

It catalyses the reaction (2R)-2,3-dihydroxy-3-methylbutanoate + NADP(+) = (2S)-2-acetolactate + NADPH + H(+). It carries out the reaction (2R,3R)-2,3-dihydroxy-3-methylpentanoate + NADP(+) = (S)-2-ethyl-2-hydroxy-3-oxobutanoate + NADPH + H(+). It functions in the pathway amino-acid biosynthesis; L-isoleucine biosynthesis; L-isoleucine from 2-oxobutanoate: step 2/4. Its pathway is amino-acid biosynthesis; L-valine biosynthesis; L-valine from pyruvate: step 2/4. Functionally, involved in the biosynthesis of branched-chain amino acids (BCAA). Catalyzes an alkyl-migration followed by a ketol-acid reduction of (S)-2-acetolactate (S2AL) to yield (R)-2,3-dihydroxy-isovalerate. In the isomerase reaction, S2AL is rearranged via a Mg-dependent methyl migration to produce 3-hydroxy-3-methyl-2-ketobutyrate (HMKB). In the reductase reaction, this 2-ketoacid undergoes a metal-dependent reduction by NADPH to yield (R)-2,3-dihydroxy-isovalerate. The polypeptide is Ketol-acid reductoisomerase (NADP(+)) (Cutibacterium acnes (strain DSM 16379 / KPA171202) (Propionibacterium acnes)).